A 397-amino-acid chain; its full sequence is MQILRFSDLCAQGQARGQRVFIRADLNVPQDDDGRITEDTRIRASVPCIRMALDAGAAVMVTSHLGRPTEGTLTPADSLAPVAARLSELLGCDVPLVADWVDGVQVQPGQVVLLENCRVNVGEKKNTPELAQKMAKLCDIYVNDAFGTAHRAEGTTYGIAEYAKVACAGPLLSAEIDAIGKALSQPARPLAAIVAGSKVSTKLTILKSLSDKVDQLIVGGGIANTFMLAAGLSIGKSLAEPDLVSEAKAVIEAMKARGAEVPIPTDVVVAKTFSADAPATVKAATDVADDDLILDIGPQTAAKLAAQLKAAGTIVWNGPVGVFEFPAFENGTKAIAQAIAESPAFSIAGGGDTLAAIAKYGIEKDVGYISTGGGAFLEVLEGKTLPAFEILHKRANG.

Residues 25-27 (DLN), arginine 41, 64-67 (HLGR), arginine 118, and arginine 151 contribute to the substrate site. Residues lysine 202, glutamate 324, and 350-353 (GGDT) contribute to the ATP site.

The protein belongs to the phosphoglycerate kinase family. Monomer.

Its subcellular location is the cytoplasm. It catalyses the reaction (2R)-3-phosphoglycerate + ATP = (2R)-3-phospho-glyceroyl phosphate + ADP. The protein operates within carbohydrate degradation; glycolysis; pyruvate from D-glyceraldehyde 3-phosphate: step 2/5. This chain is Phosphoglycerate kinase, found in Paracidovorax citrulli (strain AAC00-1) (Acidovorax citrulli).